Reading from the N-terminus, the 787-residue chain is uncharacterized protein (787 aa).

A signal peptide spans 1-22; it reads MKFKYCAIFFSGFLGLSAILAA. Residue Cys23 is the site of N-palmitoyl cysteine attachment. The S-diacylglycerol cysteine moiety is linked to residue Cys23. Disordered regions lie at residues 178–270 and 473–495; these read SDNV…DNKI and KSKE…KKES. Over residues 181 to 208 the composition is skewed to polar residues; the sequence is VKVSQRTGETTQKSKVTNPLKINTQNDP. Residues 209 to 219 show a composition bias toward basic and acidic residues; that stretch reads ATKDLWEKIEA. Residues 242-261 show a composition bias toward low complexity; sequence SSSSSLVNLKQSTDQTTTDD.

Belongs to the MG185/MG260 family.

It is found in the cell membrane. This is an uncharacterized protein from Mycoplasma pneumoniae (strain ATCC 29342 / M129 / Subtype 1) (Mycoplasmoides pneumoniae).